Here is a 748-residue protein sequence, read N- to C-terminus: Formate acetyltransferase (748 aa).

Residues asparagine 5–lysine 618 form the PFL domain. Cysteine 412 acts as the S-acetylcysteine intermediate in catalysis. Cysteine 413 serves as the catalytic Cysteine radical intermediate. A Glycine radical domain is found at proline 625–methionine 748. Glycine 723 is modified (glycine radical).

It belongs to the glycyl radical enzyme (GRE) family. PFL subfamily. In terms of assembly, homodimer.

The protein localises to the cytoplasm. It carries out the reaction formate + acetyl-CoA = pyruvate + CoA. The protein operates within fermentation; pyruvate fermentation; formate from pyruvate: step 1/1. Its function is as follows. Catalyzes the conversion of pyruvate to formate and acetyl-CoA. The chain is Formate acetyltransferase (pflB) from Staphylococcus epidermidis (strain ATCC 12228 / FDA PCI 1200).